Reading from the N-terminus, the 654-residue chain is Fructose-1,6-bisphosphatase class 3 (654 aa).

This sequence belongs to the FBPase class 3 family. Requires Mn(2+) as cofactor.

It carries out the reaction beta-D-fructose 1,6-bisphosphate + H2O = beta-D-fructose 6-phosphate + phosphate. Its pathway is carbohydrate biosynthesis; gluconeogenesis. The protein is Fructose-1,6-bisphosphatase class 3 of Staphylococcus epidermidis (strain ATCC 35984 / DSM 28319 / BCRC 17069 / CCUG 31568 / BM 3577 / RP62A).